The following is a 27-amino-acid chain: Caerulein precursor fragment R1 (27 aa).

In terms of tissue distribution, expressed by the skin glands.

It localises to the secreted. Antimicrobial peptide. In Xenopus ruwenzoriensis (Uganda clawed frog), this protein is Caerulein precursor fragment R1.